Consider the following 392-residue polypeptide: NADH dehydrogenase-like protein YjlD (392 aa).

This sequence belongs to the NADH dehydrogenase family. It depends on FAD as a cofactor.

This Bacillus subtilis (strain 168) protein is NADH dehydrogenase-like protein YjlD (yjlD).